Consider the following 837-residue polypeptide: Tuftelin-interacting protein 11 (837 aa).

Basic and acidic residues-rich tracts occupy residues 1-13 (MSLS…GEGR) and 53-64 (VWAERDSDDERP). Disordered stretches follow at residues 1-21 (MSLS…DDER), 53-72 (VWAE…KRAR), and 85-133 (LKKG…KGFA). Residues 1-50 (MSLSHLYRDGEGRIDDDDDERENFEITDWDLQNEFNPNRQRHWQTKEEAT) form a required for interaction with DHX15 region. Phosphoserine occurs at positions 2, 59, and 98. Over residues 91–102 (EEAELEDSDDEE) the composition is skewed to acidic residues. A compositionally biased stretch (basic and acidic residues) spans 103–116 (KPVKQDDFPKDFGP). Residue serine 144 is modified to Phosphoserine. In terms of domain architecture, G-patch spans 149 to 195 (TKGIGQKLLQKMGYVPGRGLGKNAQGIINPIEAKQRKGKGAVGAYGS). Positions 179 to 236 (IEAKQRKGKGAVGAYGSERTTQSMQDFPVVDSEEEAEEEFQKELSQWRKDPSGSKKKP) are disordered. At serine 210 the chain carries Phosphoserine. Positions 217–231 (EFQKELSQWRKDPSG) are enriched in basic and acidic residues. Residues 700 to 705 (VKDKFN) carry the Nuclear localization signal motif. A required for nuclear speckle localization region spans residues 710-734 (IMNRAVSSNVGAYMQPGARENIAYL).

It belongs to the TFP11/STIP family. Identified in the spliceosome C complex. Found in the Intron Large (IL) complex, a post-mRNA release spliceosomal complex containing the excised intron, U2, U5 and U6 snRNPs, and splicing factors. Interacts with TUFT1. Interacts with DHX15; indicative for a recruitment of DHX15 to the IL complex. Interacts with GCFC2.

The protein localises to the cytoplasm. The protein resides in the nucleus. In terms of biological role, involved in pre-mRNA splicing, specifically in spliceosome disassembly during late-stage splicing events. Intron turnover seems to proceed through reactions in two lariat-intron associated complexes termed Intron Large (IL) and Intron Small (IS). In cooperation with DHX15 seems to mediate the transition of the U2, U5 and U6 snRNP-containing IL complex to the snRNP-free IS complex leading to efficient debranching and turnover of excised introns. May play a role in the differentiation of ameloblasts and odontoblasts or in the forming of the enamel extracellular matrix. The sequence is that of Tuftelin-interacting protein 11 (TFIP11) from Pan troglodytes (Chimpanzee).